Here is a 423-residue protein sequence, read N- to C-terminus: Gamma-glutamyl phosphate reductase (423 aa).

It belongs to the gamma-glutamyl phosphate reductase family.

It localises to the cytoplasm. The catalysed reaction is L-glutamate 5-semialdehyde + phosphate + NADP(+) = L-glutamyl 5-phosphate + NADPH + H(+). It functions in the pathway amino-acid biosynthesis; L-proline biosynthesis; L-glutamate 5-semialdehyde from L-glutamate: step 2/2. Its function is as follows. Catalyzes the NADPH-dependent reduction of L-glutamate 5-phosphate into L-glutamate 5-semialdehyde and phosphate. The product spontaneously undergoes cyclization to form 1-pyrroline-5-carboxylate. The protein is Gamma-glutamyl phosphate reductase of Paraburkholderia phytofirmans (strain DSM 17436 / LMG 22146 / PsJN) (Burkholderia phytofirmans).